The sequence spans 255 residues: Proteasome subunit alpha type-3 (255 aa).

Ser2 is modified (N-acetylserine). Lys57, Lys206, and Lys230 each carry N6-acetyllysine. 2 positions are modified to phosphoserine: Ser243 and Ser250.

The protein belongs to the peptidase T1A family. The 26S proteasome consists of a 20S proteasome core and two 19S regulatory subunits. The 20S proteasome core is a barrel-shaped complex made of 28 subunits that are arranged in four stacked rings. The two outer rings are each formed by seven alpha subunits, and the two inner rings are formed by seven beta subunits. The proteolytic activity is exerted by three beta-subunits PSMB5, PSMB6 and PSMB7. Interacts with AURKB. Interacts with CDKN1A. Interacts with MDM2 and RB1. Interacts with the C-terminus of TBXA2R isoform 2. Interacts with DNAJB2. In terms of assembly, (Microbial infection) Interacts with HIV-1 Tat protein. As to quaternary structure, (Microbial infection) Interacts with hepatitis C virus (HCV) F protein. (Microbial infection) Interacts with Epstein-Barr virus EBNA3 proteins.

It localises to the cytoplasm. The protein resides in the nucleus. Functionally, component of the 20S core proteasome complex involved in the proteolytic degradation of most intracellular proteins. This complex plays numerous essential roles within the cell by associating with different regulatory particles. Associated with two 19S regulatory particles, forms the 26S proteasome and thus participates in the ATP-dependent degradation of ubiquitinated proteins. The 26S proteasome plays a key role in the maintenance of protein homeostasis by removing misfolded or damaged proteins that could impair cellular functions, and by removing proteins whose functions are no longer required. Associated with the PA200 or PA28, the 20S proteasome mediates ubiquitin-independent protein degradation. This type of proteolysis is required in several pathways including spermatogenesis (20S-PA200 complex) or generation of a subset of MHC class I-presented antigenic peptides (20S-PA28 complex). Binds to the C-terminus of CDKN1A and thereby mediates its degradation. Negatively regulates the membrane trafficking of the cell-surface thromboxane A2 receptor (TBXA2R) isoform 2. This Homo sapiens (Human) protein is Proteasome subunit alpha type-3.